The following is a 912-amino-acid chain: Metabotropic glutamate receptor 4 (912 aa).

An N-terminal signal peptide occupies residues 1–32 (MPGKSGLGWWWARLPLCLLLSLYGPWMPSSLG). Over 33-586 (KPKGHPHMNS…PIIKLEWDSP (554 aa)) the chain is Extracellular. Cys-67 and Cys-109 are disulfide-bonded. Asn-98 is a glycosylation site (N-linked (GlcNAc...) asparagine). Residues Ser-159, 180–182 (AST), and Tyr-230 each bind L-glutamate. 7 disulfide bridges follow: Cys-249–Cys-538, Cys-372–Cys-388, Cys-428–Cys-435, Cys-520–Cys-539, Cys-524–Cys-542, Cys-545–Cys-557, and Cys-560–Cys-573. An N-linked (GlcNAc...) asparagine glycan is attached at Asn-301. Asp-312 contacts L-glutamate. Lys-405 contributes to the L-glutamate binding site. 2 N-linked (GlcNAc...) asparagine glycosylation sites follow: Asn-454 and Asn-484. An N-linked (GlcNAc...) asparagine glycan is attached at Asn-569. The helical transmembrane segment at 587–607 (WAVLPLFLAVVGIAATLFVVI) threads the bilayer. Residues 608 to 624 (TFVRYNDTPIVKASGRE) are Cytoplasmic-facing. The helical transmembrane segment at 625–645 (LSYVLLAGIFLCYATTFLMIA) threads the bilayer. Residues 646 to 653 (EPDLGTCS) lie on the Extracellular side of the membrane. Residues 654 to 671 (LRRIFLGLGMSISYAALL) form a helical membrane-spanning segment. At 672 to 699 (TKTNRIYRIFEQGKRSVSAPRFISPASQ) the chain is on the cytoplasmic side. The helical transmembrane segment at 700 to 720 (LAITFSLISLQLLGICVWFVV) threads the bilayer. Over 721-751 (DPSHSVVDFQDQRTLDPRFARGVLKCDISDL) the chain is Extracellular. A helical transmembrane segment spans residues 752-772 (SLICLLGYSMLLMVTCTVYAI). Over 773–786 (KTRGVPETFNEAKP) the chain is Cytoplasmic. A helical membrane pass occupies residues 787–807 (IGFTMYTTCIVWLAFIPIFFG). Residues 808–826 (TSQSADKLYIQTTTLTVSV) lie on the Extracellular side of the membrane. A helical transmembrane segment spans residues 827 to 847 (SLSASVSLGMLYMPKVYIILF). Topologically, residues 848 to 912 (HPEQNVPKRK…TYVTYTNHAI (65 aa)) are cytoplasmic.

Belongs to the G-protein coupled receptor 3 family. As to quaternary structure, interacts with PICK1.

It localises to the cell membrane. G-protein coupled receptor for glutamate. Ligand binding causes a conformation change that triggers signaling via guanine nucleotide-binding proteins (G proteins) and modulates the activity of down-stream effectors. Signaling inhibits adenylate cyclase activity. This Macaca fascicularis (Crab-eating macaque) protein is Metabotropic glutamate receptor 4 (GRM4).